Consider the following 274-residue polypeptide: Triosephosphate isomerase (274 aa).

13–15 (NWK) serves as a coordination point for substrate. Residue His-98 is the Electrophile of the active site. The Proton acceptor role is filled by Glu-170. Gly-176 and Ser-216 together coordinate substrate.

It belongs to the triosephosphate isomerase family. As to quaternary structure, homodimer.

It is found in the cytoplasm. The catalysed reaction is D-glyceraldehyde 3-phosphate = dihydroxyacetone phosphate. It functions in the pathway carbohydrate biosynthesis; gluconeogenesis. Its pathway is carbohydrate degradation; glycolysis; D-glyceraldehyde 3-phosphate from glycerone phosphate: step 1/1. Its function is as follows. Involved in the gluconeogenesis. Catalyzes stereospecifically the conversion of dihydroxyacetone phosphate (DHAP) to D-glyceraldehyde-3-phosphate (G3P). The sequence is that of Triosephosphate isomerase from Onion yellows phytoplasma (strain OY-M).